We begin with the raw amino-acid sequence, 81 residues long: ATP synthase subunit C, plastid (81 aa).

The next 2 membrane-spanning stretches (helical) occupy residues 3 to 23 (PIIS…ASIG) and 57 to 77 (LAFM…LLFA).

This sequence belongs to the ATPase C chain family. F-type ATPases have 2 components, F(1) - the catalytic core - and F(0) - the membrane proton channel. F(1) has five subunits: alpha(3), beta(3), gamma(1), delta(1), epsilon(1). F(0) has four main subunits: a(1), b(1), b'(1) and c(10-14). The alpha and beta chains form an alternating ring which encloses part of the gamma chain. F(1) is attached to F(0) by a central stalk formed by the gamma and epsilon chains, while a peripheral stalk is formed by the delta, b and b' chains.

The protein resides in the plastid membrane. Functionally, f(1)F(0) ATP synthase produces ATP from ADP in the presence of a proton or sodium gradient. F-type ATPases consist of two structural domains, F(1) containing the extramembraneous catalytic core and F(0) containing the membrane proton channel, linked together by a central stalk and a peripheral stalk. During catalysis, ATP synthesis in the catalytic domain of F(1) is coupled via a rotary mechanism of the central stalk subunits to proton translocation. Its function is as follows. Key component of the F(0) channel; it plays a direct role in translocation across the membrane. A homomeric c-ring of between 10-14 subunits forms the central stalk rotor element with the F(1) delta and epsilon subunits. The chain is ATP synthase subunit C, plastid from Cuscuta gronovii (Common dodder).